We begin with the raw amino-acid sequence, 56 residues long: Ovomucoid (56 aa).

The Kazal-like domain maps to 6–56 (VDCSEYPKPDCTLEYRPLCGSDNKTYANKCNFCNAVVESNGTLTLSHFGKC). Cystine bridges form between Cys8–Cys38, Cys16–Cys35, and Cys24–Cys56. A glycan (N-linked (GlcNAc...) asparagine) is linked at Asn45.

Its subcellular location is the secreted. This chain is Ovomucoid, found in Callipepla squamata castanogastris (Chestnut bellied scaled quail).